Here is a 375-residue protein sequence, read N- to C-terminus: Trans-enoyl reductase iccB (375 aa).

48–51 (VDAK) contributes to the NADP(+) binding site. 143 to 150 (AAVATVGL) lines the substrate pocket. Residues 204–207 (SSAS), Tyr222, and 269–270 (LD) contribute to the NADP(+) site. A substrate-binding site is contributed by 289-293 (TYSQF). 358–359 (IK) provides a ligand contact to NADP(+).

Belongs to the zinc-containing alcohol dehydrogenase family. In terms of assembly, monomer.

The enzyme catalyses N-[(4E,6E,10S,12Z,14E)-6,10-dimethyl-3-oxohexadeca-4,6,12,14-tetraenoyl]-L-tyrosyl-[ACP] = (3E,5S)-3-[(2E,4E,8S,10E,12Z)-1-hydroxy-4,8-dimethyltetradeca-2,4,10,12-tetraen-1-ylidene]-5-[(4-hydroxyphenyl)methyl]pyrrolidine-2,4-dione + holo-[ACP] + H(+). The protein operates within mycotoxin biosynthesis. Its function is as follows. Trans-enoyl reductase; part of the gene cluster that mediates the biosynthesis of ilicicolin H, a 4-hydroxy-2-pyridonealkaloid that has potent and broad antifungal activities by inhibiting the mitochondrial respiration chain. IccB collaborates with the hybrid PKS-NRPS synthetase iccA to assemble the backbone of ilicicolin H. The PKS portion of iccA and trans-acting enoyl reductase iccB work together to construct an octaketide, and two methyl groups are introduced by the MT domain of iccA during the chain assembly. The nascent chain is then condensed with tyrosine, catalyzed by the iliA C domain, and the resulting PKS-NRPS hybrid is offloaded by the iliA RED domain to form an advanced tetramic acid intermediate. The biosynthesis of ilicicolin H starts with formation of the tetramic acid by the hybrid PKS-NRPS synthetase iccA with the partnering trans-enoyl reductase iccB since iccA lacks a designated enoylreductase (ER) domain. The cytochrome P450 monooxygenase iccC then catalyzes the ring expansion of the tetramate to the acyclic 2-pyridone. The pericyclase iccD further converts the acyclic 2-pyridone into 8-epi-ilicicolin H. Finally, the epimerase iccE converts 8-epi-ilicicolin H into ilicicolin H via epimerization. IccA to iccE are sufficient for ilicicolin H biosynthesis and the roles of the remaining enzymes, iccF, iccG and iccH within the pathway have still to be determined. This chain is Trans-enoyl reductase iccB, found in Talaromyces variabilis (Penicillium variabile).